A 320-amino-acid polypeptide reads, in one-letter code: 1-aminocyclopropane-1-carboxylate oxidase 3 (320 aa).

One can recognise a Fe2OG dioxygenase domain in the interval Pro-153–Pro-253. Residues His-177, Asp-179, and His-234 each contribute to the Fe cation site.

This sequence belongs to the iron/ascorbate-dependent oxidoreductase family. Fe cation is required as a cofactor.

The enzyme catalyses 1-aminocyclopropane-1-carboxylate + L-ascorbate + O2 = ethene + L-dehydroascorbate + hydrogen cyanide + CO2 + 2 H2O. Its pathway is alkene biosynthesis; ethylene biosynthesis via S-adenosyl-L-methionine; ethylene from S-adenosyl-L-methionine: step 2/2. The protein is 1-aminocyclopropane-1-carboxylate oxidase 3 (ACO3) of Petunia hybrida (Petunia).